An 86-amino-acid polypeptide reads, in one-letter code: Large ribosomal subunit protein bL27 (86 aa).

This sequence belongs to the bacterial ribosomal protein bL27 family.

The polypeptide is Large ribosomal subunit protein bL27 (Xanthomonas campestris pv. campestris (strain 8004)).